We begin with the raw amino-acid sequence, 128 residues long: Otoraplin (128 aa).

The N-terminal stretch at 1 to 18 is a signal peptide; sequence MARILILLLGGLVVLCAG. Intrachain disulfides connect Cys-32/Cys-37 and Cys-55/Cys-127. In terms of domain architecture, SH3 spans 39–110; it reads YTISLARAQE…PSNLVKEQRV (72 aa).

It belongs to the MIA/OTOR family. Highly expressed in cochlea.

The protein resides in the secreted. The protein is Otoraplin (Otor) of Mus musculus (Mouse).